Here is a 171-residue protein sequence, read N- to C-terminus: Adenine phosphoribosyltransferase (171 aa).

It belongs to the purine/pyrimidine phosphoribosyltransferase family. In terms of assembly, homodimer.

The protein localises to the cytoplasm. It catalyses the reaction AMP + diphosphate = 5-phospho-alpha-D-ribose 1-diphosphate + adenine. The protein operates within purine metabolism; AMP biosynthesis via salvage pathway; AMP from adenine: step 1/1. Its function is as follows. Catalyzes a salvage reaction resulting in the formation of AMP, that is energically less costly than de novo synthesis. The chain is Adenine phosphoribosyltransferase from Geotalea uraniireducens (strain Rf4) (Geobacter uraniireducens).